The chain runs to 397 residues: Argininosuccinate synthase (397 aa).

ATP-binding positions include 9–17 (AFSGGLDTS) and Ala-35. The L-citrulline site is built by Tyr-88 and Ser-93. Gly-117 lines the ATP pocket. 3 residues coordinate L-aspartate: Thr-119, Asn-123, and Asp-124. Asn-123 contacts L-citrulline. Position 127 (Arg-127) interacts with L-citrulline.

The protein belongs to the argininosuccinate synthase family. Type 1 subfamily. As to quaternary structure, homotetramer.

It is found in the cytoplasm. The enzyme catalyses L-citrulline + L-aspartate + ATP = 2-(N(omega)-L-arginino)succinate + AMP + diphosphate + H(+). The protein operates within amino-acid biosynthesis; L-arginine biosynthesis; L-arginine from L-ornithine and carbamoyl phosphate: step 2/3. The sequence is that of Argininosuccinate synthase from Xanthomonas campestris pv. campestris (strain ATCC 33913 / DSM 3586 / NCPPB 528 / LMG 568 / P 25).